Consider the following 392-residue polypeptide: Pannexin-3 (392 aa).

Residues 1-39 are Cytoplasmic-facing; it reads MSLAHTAAEYMLSDALLPDRRGSRLKGLRLELPLDKMVK. The chain crosses the membrane as a helical span at residues 40–60; sequence FITVGFPLLLMSLAFAQEFSS. The Extracellular portion of the chain corresponds to 61-113; that stretch reads GSPISCFSPSNFSVRQAAYVDSSCWDSLAHHTQDKAGQYKVKSLWPHKALPYS. A glycan (N-linked (GlcNAc...) asparagine) is linked at Asn-71. A helical transmembrane segment spans residues 114-134; that stretch reads LLALAVAMYLPVLLWQYVAVP. Residues 135 to 215 are Cytoplasmic-facing; it reads SLSSDLLFII…VATYLLRNAL (81 aa). A helical membrane pass occupies residues 216 to 236; the sequence is LLLFTSATYLYLGQFHLDVFF. At 237–267 the chain is on the extracellular side; it reads QDEFNCFIKTGLLHDETHVPELITCRLTSLS. Residues 268–288 traverse the membrane as a helical segment; sequence VFQIVSVSSAAIYTILVPVII. Over 289 to 392 the chain is Cytoplasmic; sequence YNLTRLCRWD…LTQHTYDEHA (104 aa).

The protein belongs to the pannexin family. In terms of assembly, homoheptameric. N-glycosylation may play a role in cell surface targeting. In terms of tissue distribution, expressed in skin, cartilage, heart, lung, liver, spleen, thymus and kidney. Not expressed in brain. Expressed in calvarial cells.

Its subcellular location is the cell membrane. It localises to the endoplasmic reticulum membrane. The catalysed reaction is Ca(2+)(in) = Ca(2+)(out). It carries out the reaction ATP(in) = ATP(out). Functionally, regulator of osteoblast differentiation by functionning as a Ca(2+) channel in the endoplasmic reticulum which regulates calmodulin (CaM) pathways. Allows ATP release into the extracellular space and activation or purinergic receptors. In Mus musculus (Mouse), this protein is Pannexin-3 (Panx3).